Consider the following 360-residue polypeptide: Glutamate 5-kinase (360 aa).

Residue Lys7 participates in ATP binding. 3 residues coordinate substrate: Ser47, Asp134, and Asn146. Residues 166-167 (TD) and 210-216 (TGGISTK) each bind ATP. The region spanning 275 to 356 (VGKITLDDGA…SSIIVVHRDV (82 aa)) is the PUA domain.

The protein belongs to the glutamate 5-kinase family.

The protein localises to the cytoplasm. The catalysed reaction is L-glutamate + ATP = L-glutamyl 5-phosphate + ADP. It participates in amino-acid biosynthesis; L-proline biosynthesis; L-glutamate 5-semialdehyde from L-glutamate: step 1/2. Functionally, catalyzes the transfer of a phosphate group to glutamate to form L-glutamate 5-phosphate. This chain is Glutamate 5-kinase, found in Prochlorococcus marinus (strain MIT 9312).